Here is a 282-residue protein sequence, read N- to C-terminus: Protein N-terminal and lysine N-methyltransferase efm7 (282 aa).

Residues 1–13 (MSKPEEVVNHVPE) are compositionally biased toward basic and acidic residues. The interval 1 to 32 (MSKPEEVVNHVPEDEGSDIEAGGLFEDPPDFY) is disordered. Residues Trp67, 93–95 (GAA), Asp115, Trp152, and Ala179 each bind S-adenosyl-L-methionine.

The protein belongs to the class I-like SAM-binding methyltransferase superfamily. EFM7 family.

It localises to the cytoplasm. S-adenosyl-L-methionine-dependent protein methyltransferase that trimethylates the N-terminal glycine 'Gly-2' of elongation factor 1-alpha, before also catalyzing the mono- and dimethylation of 'Lys-3'. This chain is Protein N-terminal and lysine N-methyltransferase efm7 (nnt-1), found in Neurospora crassa (strain ATCC 24698 / 74-OR23-1A / CBS 708.71 / DSM 1257 / FGSC 987).